A 238-amino-acid chain; its full sequence is Ribosomal RNA small subunit methyltransferase G (238 aa).

Residues Gly-75, Leu-80, 126-127 (AE), and Arg-142 contribute to the S-adenosyl-L-methionine site.

The protein belongs to the methyltransferase superfamily. RNA methyltransferase RsmG family.

It localises to the cytoplasm. In terms of biological role, specifically methylates the N7 position of guanine in position 518 of 16S rRNA. This is Ribosomal RNA small subunit methyltransferase G from Streptomyces avermitilis (strain ATCC 31267 / DSM 46492 / JCM 5070 / NBRC 14893 / NCIMB 12804 / NRRL 8165 / MA-4680).